The chain runs to 79 residues: Centromere protein X (79 aa).

M1 carries the N-acetylmethionine modification.

This sequence belongs to the CENP-X/MHF2 family. In terms of assembly, heterodimer with CENPX, sometimes called MHF; this interaction stabilizes both partners. MHF heterodimers can assemble to form tetrameric structures. MHF also coassemble with CENPT-CENPW heterodimers at centromeres to form the tetrameric CENP-T-W-S-X complex. Forms a discrete complex with FANCM and CENPX, called FANCM-MHF; this interaction, probably mediated by direct binding between CENPS and FANCM, leads to synergistic activation of double-stranded DNA binding and strongly stimulates FANCM-mediated DNA remodeling. Recruited by FANCM to the Fanconi anemia (FA) core complex, which consists of CENPS, CENPX, FANCA, FANCB, FANCC, FANCE, FANCF, FANCG, FANCL, FANCM, FAAP24 and FAAP100. The FA core complex associates with Bloom syndrome (BLM) complex, which consists of at least BLM, DNA topoisomerase 3-alpha (TOP3A), RMI1/BLAP75, RPA1/RPA70 and RPA2/RPA32. The super complex between FA and BLM is called BRAFT.

Its subcellular location is the nucleus. The protein localises to the chromosome. The protein resides in the centromere. It is found in the kinetochore. DNA-binding component of the Fanconi anemia (FA) core complex. Required for the normal activation of the FA pathway, leading to monoubiquitination of the FANCI-FANCD2 complex in response to DNA damage, cellular resistance to DNA cross-linking drugs, and prevention of chromosomal breakage. In complex with CENPS (MHF heterodimer), crucial cofactor for FANCM in both binding and ATP-dependent remodeling of DNA. Stabilizes FANCM. In complex with CENPS and FANCM (but not other FANC proteins), rapidly recruited to blocked forks and promotes gene conversion at blocked replication forks. In complex with CENPS, CENPT and CENPW (CENP-T-W-S-X heterotetramer), involved in the formation of a functional kinetochore outer plate, which is essential for kinetochore-microtubule attachment and faithful mitotic progression. As a component of MHF and CENP-T-W-S-X complexes, binds DNA and bends it to form a nucleosome-like structure. DNA-binding function is fulfilled in the presence of CENPS, with the following preference for DNA substates: Holliday junction &gt; double-stranded &gt; splay arm &gt; single-stranded. Does not bind DNA on its own. The chain is Centromere protein X (CENPX) from Bos taurus (Bovine).